The chain runs to 541 residues: Protein wntless homolog (541 aa).

Residues 1–15 (MAGAIIENMSTKKLC) lie on the Cytoplasmic side of the membrane. Residues 16–36 (IVGGILLVFQIIAFLVGGLIA) traverse the membrane as a helical segment. Residues 37–232 (PGPTTAVSYM…GIHQNGGFTK (196 aa)) are Lumenal-facing. The interaction with Wnt proteins stretch occupies residues 101-232 (MEMSPWFQFM…GIHQNGGFTK (132 aa)). Residues 233–253 (VWFAMKTFLTPSIFIIMVWYW) form a helical membrane-spanning segment. At 254–268 (RRITMMSRPPVLLEK) the chain is on the cytoplasmic side. A helical membrane pass occupies residues 269-289 (VIFALGISMTFINIPVEWFSI). At 290–303 (GFDWTWMLLFGDIR) the chain is on the lumenal side. Residues 304–324 (QGIFYAMLLSFWIIFCGEHMM) traverse the membrane as a helical segment. Residues 325 to 331 (DQHERNH) are Cytoplasmic-facing. The helical transmembrane segment at 332 to 352 (IAGYWKQVGPIAVGSFCLFIF) threads the bilayer. Residues 353–380 (DMCERGVQLTNPFYSIWTTDIGTELAMA) lie on the Lumenal side of the membrane. The helical transmembrane segment at 381–401 (FIIVAGICLCLYFLFLCFMVF) threads the bilayer. Residues 402-431 (QVFRNISGKQSSLPAMSKVRRLHYEGLIFR) lie on the Cytoplasmic side of the membrane. A helical transmembrane segment spans residues 432 to 452 (FKFLMLITLACAAMTVIFFIV). Residues 453 to 471 (SQVTEGHWKWGGVTVQVNS) lie on the Lumenal side of the membrane. Residues 472-492 (AFFTGIYGMWNLYVFALMFLY) traverse the membrane as a helical segment. Residues 493 to 541 (APSHKNYGEDQSNGDLGVHSGEELQLTTTITHVDGPTEIYKLTRKEAQE) are Cytoplasmic-facing.

It belongs to the wntless family. Interacts with WNT3A. Interacts with WNT1, WNT3 and WNT5A. Post-translationally, N-glycosylated.

The protein localises to the golgi apparatus membrane. It is found in the cytoplasmic vesicle membrane. It localises to the cell membrane. The protein resides in the endoplasmic reticulum membrane. Its subcellular location is the early endosome membrane. Its function is as follows. Regulates Wnt proteins sorting and secretion in a feedback regulatory mechanism. This reciprocal interaction plays a key role in the regulation of expression, subcellular location, binding and organelle-specific association of Wnt proteins. Plays also an important role in establishment of the anterior-posterior body axis formation during development. The chain is Protein wntless homolog (WLS) from Homo sapiens (Human).